The following is a 527-amino-acid chain: AAA ATPase forming ring-shaped complexes (527 aa).

The segment covering 1–18 (MVTMSSPTDSSPSNSFSD) has biased composition (low complexity). The interval 1–38 (MVTMSSPTDSSPSNSFSDFNREEQSRLSDEVRQLKRTN) is disordered. The span at 19–33 (FNREEQSRLSDEVRQ) shows a compositional bias: basic and acidic residues. Positions 21–53 (REEQSRLSDEVRQLKRTNSDLGARNAKLAEMLK) form a coiled coil. ATP is bound at residue 257 to 262 (GCGKTL). The interval 492 to 515 (DENQQSEDLPNTSNPDEWSRITGR) is disordered. Over residues 497-507 (SEDLPNTSNPD) the composition is skewed to polar residues.

This sequence belongs to the AAA ATPase family. Homohexamer. Assembles into a hexameric ring structure.

The polypeptide is AAA ATPase forming ring-shaped complexes (Corynebacterium glutamicum (strain R)).